We begin with the raw amino-acid sequence, 108 residues long: UPF0102 protein Sden_0272 (108 aa).

The protein belongs to the UPF0102 family.

The chain is UPF0102 protein Sden_0272 from Shewanella denitrificans (strain OS217 / ATCC BAA-1090 / DSM 15013).